Reading from the N-terminus, the 1252-residue chain is DNA-directed RNA polymerase subunit beta (1252 aa).

It belongs to the RNA polymerase beta chain family. The RNAP catalytic core consists of 2 alpha, 1 beta, 1 beta' and 1 omega subunit. When a sigma factor is associated with the core the holoenzyme is formed, which can initiate transcription.

The catalysed reaction is RNA(n) + a ribonucleoside 5'-triphosphate = RNA(n+1) + diphosphate. Functionally, DNA-dependent RNA polymerase catalyzes the transcription of DNA into RNA using the four ribonucleoside triphosphates as substrates. This chain is DNA-directed RNA polymerase subunit beta, found in Chlamydia pneumoniae (Chlamydophila pneumoniae).